The sequence spans 94 residues: Large ribosomal subunit protein bL31 (94 aa).

The tract at residues 64–94 (KYGMANPDEDSTKNTKSSKKETSEDSSSKGS) is disordered. The segment covering 73–94 (DSTKNTKSSKKETSEDSSSKGS) has biased composition (basic and acidic residues).

It belongs to the bacterial ribosomal protein bL31 family. Type A subfamily. In terms of assembly, part of the 50S ribosomal subunit.

Binds the 23S rRNA. The chain is Large ribosomal subunit protein bL31 from Prochlorococcus marinus (strain SARG / CCMP1375 / SS120).